Consider the following 147-residue polypeptide: 3-hydroxyacyl-[acyl-carrier-protein] dehydratase FabZ (147 aa).

The active site involves histidine 51.

Belongs to the thioester dehydratase family. FabZ subfamily.

The protein resides in the cytoplasm. It carries out the reaction a (3R)-hydroxyacyl-[ACP] = a (2E)-enoyl-[ACP] + H2O. Its function is as follows. Involved in unsaturated fatty acids biosynthesis. Catalyzes the dehydration of short chain beta-hydroxyacyl-ACPs and long chain saturated and unsaturated beta-hydroxyacyl-ACPs. The chain is 3-hydroxyacyl-[acyl-carrier-protein] dehydratase FabZ from Anaplasma marginale (strain Florida).